Consider the following 78-residue polypeptide: Large ribosomal subunit protein bL28 (78 aa).

The protein belongs to the bacterial ribosomal protein bL28 family.

The protein is Large ribosomal subunit protein bL28 of Flavobacterium johnsoniae (strain ATCC 17061 / DSM 2064 / JCM 8514 / BCRC 14874 / CCUG 350202 / NBRC 14942 / NCIMB 11054 / UW101) (Cytophaga johnsonae).